A 424-amino-acid polypeptide reads, in one-letter code: Phosphomethylpyrimidine synthase (424 aa).

Residues Asn66, Met95, Tyr124, His163, Ser185–Gly187, Asp226–Arg229, and Glu265 each bind substrate. Residue His269 participates in Zn(2+) binding. Position 292 (Phe292) interacts with substrate. A Zn(2+)-binding site is contributed by His333. Residues Cys408, Cys411, and Cys415 each coordinate [4Fe-4S] cluster.

Belongs to the ThiC family. It depends on [4Fe-4S] cluster as a cofactor.

It carries out the reaction 5-amino-1-(5-phospho-beta-D-ribosyl)imidazole + S-adenosyl-L-methionine = 4-amino-2-methyl-5-(phosphooxymethyl)pyrimidine + CO + 5'-deoxyadenosine + formate + L-methionine + 3 H(+). It functions in the pathway cofactor biosynthesis; thiamine diphosphate biosynthesis. Functionally, catalyzes the synthesis of the hydroxymethylpyrimidine phosphate (HMP-P) moiety of thiamine from aminoimidazole ribotide (AIR) in a radical S-adenosyl-L-methionine (SAM)-dependent reaction. The sequence is that of Phosphomethylpyrimidine synthase from Thermotoga sp. (strain RQ2).